A 164-amino-acid polypeptide reads, in one-letter code: Crossover junction endodeoxyribonuclease RuvC (164 aa).

Residues D7, E67, and D139 contribute to the active site. Residues D7, E67, and D139 each coordinate Mg(2+).

It belongs to the RuvC family. In terms of assembly, homodimer which binds Holliday junction (HJ) DNA. The HJ becomes 2-fold symmetrical on binding to RuvC with unstacked arms; it has a different conformation from HJ DNA in complex with RuvA. In the full resolvosome a probable DNA-RuvA(4)-RuvB(12)-RuvC(2) complex forms which resolves the HJ. It depends on Mg(2+) as a cofactor.

Its subcellular location is the cytoplasm. It catalyses the reaction Endonucleolytic cleavage at a junction such as a reciprocal single-stranded crossover between two homologous DNA duplexes (Holliday junction).. Its function is as follows. The RuvA-RuvB-RuvC complex processes Holliday junction (HJ) DNA during genetic recombination and DNA repair. Endonuclease that resolves HJ intermediates. Cleaves cruciform DNA by making single-stranded nicks across the HJ at symmetrical positions within the homologous arms, yielding a 5'-phosphate and a 3'-hydroxyl group; requires a central core of homology in the junction. The consensus cleavage sequence is 5'-(A/T)TT(C/G)-3'. Cleavage occurs on the 3'-side of the TT dinucleotide at the point of strand exchange. HJ branch migration catalyzed by RuvA-RuvB allows RuvC to scan DNA until it finds its consensus sequence, where it cleaves and resolves the cruciform DNA. This is Crossover junction endodeoxyribonuclease RuvC from Citrifermentans bemidjiense (strain ATCC BAA-1014 / DSM 16622 / JCM 12645 / Bem) (Geobacter bemidjiensis).